We begin with the raw amino-acid sequence, 537 residues long: 5,6-dihydroxyindole-2-carboxylic acid oxidase (537 aa).

An N-terminal signal peptide occupies residues Met1–Ala24. The Lumenal, melanosome segment spans residues Gln25–Glu477. Disulfide bonds link Cys30-Cys41, Cys42-Cys65, Cys56-Cys99, Cys101-Cys110, and Cys113-Cys122. N-linked (GlcNAc...) asparagine glycans are attached at residues Asn96 and Asn104. N-linked (GlcNAc...) asparagine glycosylation is present at Asn181. Residues His192, His215, and His224 each coordinate Zn(2+). 2 disulfide bridges follow: Cys258–Cys261 and Cys290–Cys303. 2 N-linked (GlcNAc...) asparagine glycosylation sites follow: Asn304 and Asn350. Residues His377 and His381 each contribute to the Zn(2+) site. N-linked (GlcNAc...) asparagine glycosylation is present at Asn385. His404 contributes to the Zn(2+) binding site. The helical transmembrane segment at Ile478–Ile501 threads the bilayer. Residues Arg502–Val537 are Cytoplasmic-facing.

It belongs to the tyrosinase family. In terms of assembly, monomer. Interacts with ATP7A. Interacts with SLC45A2. Cu(2+) is required as a cofactor. The cofactor is Zn(2+). Glycosylated. Pigment cells.

It is found in the melanosome membrane. The catalysed reaction is 2 5,6-dihydroxyindole-2-carboxylate + O2 = 2 indole-5,6-quinone-2-carboxylate + 2 H2O. The protein operates within pigment biosynthesis; melanin biosynthesis. Its activity is regulated as follows. The activity depends critically on the nature of the bound metal ion. Catalyzes the oxidation of 5,6-dihydroxyindole-2-carboxylic acid (DHICA) in the presence of bound Cu(2+) ions, but lacks activity in the presence of bound Zn(2+) ions. Functionally, plays a role in melanin biosynthesis. Catalyzes the oxidation of 5,6-dihydroxyindole-2-carboxylic acid (DHICA) into indole-5,6-quinone-2-carboxylic acid in the presence of bound Cu(2+) ions, but not in the presence of Zn(2+). May regulate or influence the type of melanin synthesized. Also to a lower extent, capable of hydroxylating tyrosine and producing melanin. This Homo sapiens (Human) protein is 5,6-dihydroxyindole-2-carboxylic acid oxidase.